The primary structure comprises 198 residues: MDAILNYRPEGSEDYYALLGCDELSSVEQILAEFKIRALECHPDKHPENSKAVETFQKLQKAKEILCNAESRARYDHWRRSQMSMPFEQWEALADSVKTSMHWAVRSKKDLMLEGSGQTFTSSVPNKERSEQRETKKGDPDSNPEKMKQKEPKFPEEGISPQNPDSPGLSDLNCGHLRFRWSGDAPSELLRKFRNYEI.

Met1 bears the N-acetylmethionine mark. A J domain is found at 14 to 79; the sequence is DYYALLGCDE…ESRARYDHWR (66 aa). A disordered region spans residues 114–177; sequence EGSGQTFTSS…GLSDLNCGHL (64 aa). Over residues 116–125 the composition is skewed to polar residues; that stretch reads SGQTFTSSVP. Positions 126 to 156 are enriched in basic and acidic residues; sequence NKERSEQRETKKGDPDSNPEKMKQKEPKFPE. Phosphoserine is present on residues Ser160, Ser166, and Ser182.

Interacts with HSPA8. Interacts with TPH1. Interacts with TPH2. In terms of tissue distribution, highest levels of expression are detected in kidney, pineal gland, and raphe nuclei in the brain where it localizes to serotonerigic neurons.

It is found in the cytoplasm. Functionally, probable co-chaperone that participates in the proper folding of biopterin-dependent aromatic amino acid hydroxylases, which include phenylalanine-4-hydroxylase (PAH), tyrosine 3-monooxygenase (TH) and peripheral and neuronal tryptophan hydroxylases (TPH1 and TPH2). The polypeptide is DnaJ homolog subfamily C member 12 (Dnajc12) (Mus musculus (Mouse)).